The primary structure comprises 629 residues: Protein SPT2 homolog (629 aa).

An important for interaction with DNA region spans residues 1 to 522 (MDFDSVLSIA…SGHRILVKPS (522 aa)). A coiled-coil region spans residues 45–72 (QAFLKKKAVEQKNKEQQDKKAKEDLLAK). Basic and acidic residues predominate over residues 53–93 (VEQKNKEQQDKKAKEDLLAKRVELKSDRKARAMASRTKDNF). 3 disordered regions span residues 53–181 (VEQK…ASSS), 206–533 (KTEE…TSSY), and 608–629 (EDEEEERRELEEMQRKNAKKRK). Over residues 111 to 123 (KGSSTEEQQSSTK) the composition is skewed to polar residues. Residues 127–144 (GDYDDEDNFDYEGTDSES) show a composition bias toward acidic residues. Positions 203–228 (VVKKTEERLRTAEEIRELEMERRVKK) form a coiled coil. 2 stretches are compositionally biased toward basic and acidic residues: residues 206–247 (KTEE…KDSR) and 257–277 (KHVDRDGKNGRFPRPSEEKHQ). Composition is skewed to polar residues over residues 278–297 (SSSTSKKPKLQASSERTPTS), 305–327 (SNSGSSGALNSKSAMKNGASFQA), 335–345 (SQGQRPATPSD), 353–364 (VSLTQAKSSISG), 387–398 (SNFSTSGPSQKP), 437–450 (NLQSQQFPGSSRAS), and 462–490 (SGSQINRMSSGPGRSQCTVVSETISTKNI). Residues 523–629 (GPALPPITSS…MQRKNAKKRK (107 aa)) form an important for interaction with histones region. A coiled-coil region spans residues 591–629 (WKEQQKEEARSLRMAVLEDEEEERRELEEMQRKNAKKRK).

Belongs to the SPT2 family. Interacts with histones. Interacts with a heterotetrameric complex formed by histone H3 and H4, especially when the histone tetramer is not bound to DNA.

It localises to the nucleus. The protein localises to the nucleolus. Histone chaperone that stabilizes pre-existing histone tetramers and regulates replication-independent histone exchange on chromatin. Required for normal chromatin refolding in the coding region of transcribed genes, and for the suppression of spurious transcription. Binds DNA and histones and promotes nucleosome assembly (in vitro). Facilitates formation of tetrameric histone complexes containing histone H3 and H4. Modulates RNA polymerase 1-mediated transcription. Binds DNA, with a preference for branched DNA species, such as Y-form DNA and Holliday junction DNA. This chain is Protein SPT2 homolog (spty2d1), found in Danio rerio (Zebrafish).